A 66-amino-acid chain; its full sequence is Large ribosomal subunit protein bL33c (66 aa).

Belongs to the bacterial ribosomal protein bL33 family.

The protein resides in the plastid. It localises to the chloroplast. This Phalaenopsis aphrodite subsp. formosana (Moth orchid) protein is Large ribosomal subunit protein bL33c.